The chain runs to 255 residues: Borealin-2 (255 aa).

Disordered regions lie at residues 1 to 24 (MAPR…HSFE) and 107 to 156 (IQKP…STGS). The segment covering 124-135 (AGQQRSSSQSKT) has biased composition (polar residues).

The protein belongs to the borealin family. Component of the CPC complex.

It localises to the nucleus. Its subcellular location is the chromosome. The protein localises to the centromere. Component of the chromosomal passenger complex (CPC), a complex that acts as a key regulator of mitosis. The CPC complex has essential functions at the centromere in ensuring correct chromosome alignment and segregation and is required for chromatin-induced microtubule stabilization and spindle assembly. The protein is Borealin-2 (cdca9) of Danio rerio (Zebrafish).